The primary structure comprises 910 residues: Protein translocase subunit SecA (910 aa).

ATP-binding positions include Gln86, 104-108, and Asp499; that span reads GEGKT. The Zn(2+) site is built by Cys894, Cys896, Cys905, and His906.

This sequence belongs to the SecA family. In terms of assembly, monomer and homodimer. Part of the essential Sec protein translocation apparatus which comprises SecA, SecYEG and auxiliary proteins SecDF-YajC and YidC. The cofactor is Zn(2+).

The protein localises to the cell inner membrane. It localises to the cytoplasm. The enzyme catalyses ATP + H2O + cellular proteinSide 1 = ADP + phosphate + cellular proteinSide 2.. Its function is as follows. Part of the Sec protein translocase complex. Interacts with the SecYEG preprotein conducting channel. Has a central role in coupling the hydrolysis of ATP to the transfer of proteins into and across the cell membrane, serving both as a receptor for the preprotein-SecB complex and as an ATP-driven molecular motor driving the stepwise translocation of polypeptide chains across the membrane. This is Protein translocase subunit SecA from Rickettsia bellii (strain OSU 85-389).